The chain runs to 521 residues: Cytochrome P450 monooxygenase bet2 (521 aa).

Residues 23–43 (SNWRFALFVAATLLTSYIVIV) traverse the membrane as a helical segment. Asn-188 carries an N-linked (GlcNAc...) asparagine glycan. Cys-461 serves as a coordination point for heme.

This sequence belongs to the cytochrome P450 family. The cofactor is heme.

The protein resides in the membrane. The enzyme catalyses dehydroprobetaenone I + NADPH + O2 + H(+) = epoxybetaenone + NADP(+) + H2O. The catalysed reaction is dehydroprobetaenone I + 3 NADPH + 3 O2 + 3 H(+) = betaenone C + 3 NADP(+) + 3 H2O. Its pathway is mycotoxin biosynthesis. Its function is as follows. Cytochrome P450 monooxygenase; part of the gene cluster that mediates the biosynthesis of betaenones, phytotoxic polyketides involved in leaf spot disease in sugar beets. The first step of the pathway is the synthesis of dehydroprobetaenone I by the polyketide synthase bet1 and the enoyl reductase bet3 via condensation of one acetyl-CoA starter unit with 7 malonyl-CoA units and 5 methylations. The C-terminal reductase (R) domain of bet1 catalyzes the reductive release of the polyketide chain. Because bet1 lacks a designated enoylreductase (ER) domain, the required activity is provided the enoyl reductase bet3. The short-chain dehydrogenase/reductase bet4 then catalyzes reduction of dehydroprobetaenone I to probetaenone I. The cytochrome P450 monooxygenase bet2 catalyzes successive epoxidation, oxidation (resulting from epoxide opening) and hydroxylation to install a tertiary alcohol in the decaline ring to yield betaenone C from dehydroprobetaenone I and betaenone B from probetaenone I. The FAD-linked oxidoreductase (orf1) is probably responsible for the conversion of betaenone C to betaenone A via an intramolecular aldol reaction between C-1 and C-17 to form the bridged tricyclic system in betaenone A. The chain is Cytochrome P450 monooxygenase bet2 from Neocamarosporium betae (Beet black rot fungus).